The sequence spans 101 residues: Putative regulatory protein PrgT (101 aa).

Functionally, might be involved in the expression of prgA, but is not required for activation of the expression of prgB. The protein is Putative regulatory protein PrgT (prgT) of Enterococcus faecalis (strain ATCC 47077 / OG1RF).